We begin with the raw amino-acid sequence, 447 residues long: Tubulin beta-2 chain (447 aa).

Positions 11, 69, 138, 142, 143, 144, 204, and 226 each coordinate GTP. Residue E69 coordinates Mg(2+). The span at 419–428 (VSEYQQYQDA) shows a compositional bias: polar residues. The segment at 419 to 447 (VSEYQQYQDATSDEEGEYEDEDQEPEEDM) is disordered. Acidic residues predominate over residues 429 to 447 (TSDEEGEYEDEDQEPEEDM).

The protein belongs to the tubulin family. As to quaternary structure, dimer of alpha and beta chains. A typical microtubule is a hollow water-filled tube with an outer diameter of 25 nm and an inner diameter of 15 nM. Alpha-beta heterodimers associate head-to-tail to form protofilaments running lengthwise along the microtubule wall with the beta-tubulin subunit facing the microtubule plus end conferring a structural polarity. Microtubules usually have 13 protofilaments but different protofilament numbers can be found in some organisms and specialized cells. The cofactor is Mg(2+).

The protein resides in the cytoplasm. The protein localises to the cytoskeleton. Tubulin is the major constituent of microtubules, a cylinder consisting of laterally associated linear protofilaments composed of alpha- and beta-tubulin heterodimers. Microtubules grow by the addition of GTP-tubulin dimers to the microtubule end, where a stabilizing cap forms. Below the cap, tubulin dimers are in GDP-bound state, owing to GTPase activity of alpha-tubulin. This is Tubulin beta-2 chain (TUBB2) from Triticum aestivum (Wheat).